Here is a 300-residue protein sequence, read N- to C-terminus: B3 domain-containing protein At5g57720 (300 aa).

The segment at residues 11–105 (PDFLKIFNSH…SFWVRIHRNG (95 aa)) is a DNA-binding region (TF-B3). A disordered region spans residues 115 to 142 (KIQEISDDEDETNGDGDPHMEEEGDTDE). Acidic residues predominate over residues 119 to 129 (ISDDEDETNGD).

The protein resides in the nucleus. The polypeptide is B3 domain-containing protein At5g57720 (Arabidopsis thaliana (Mouse-ear cress)).